Reading from the N-terminus, the 116-residue chain is uncharacterized protein (116 aa).

2 disordered regions span residues Met-1–Asn-26 and Glu-74–Ile-116. Low complexity predominate over residues Ser-14 to Asn-26. The span at Glu-74–Glu-86 shows a compositional bias: basic and acidic residues. Residues Asn-104–Ile-116 show a composition bias toward polar residues.

This is an uncharacterized protein from Saccharomyces cerevisiae (strain ATCC 204508 / S288c) (Baker's yeast).